Here is a 161-residue protein sequence, read N- to C-terminus: Phosphopantetheine adenylyltransferase (161 aa).

Residue Ser9 participates in substrate binding. Residues 9-10 and His17 each bind ATP; that span reads SF. Substrate is bound by residues Lys41, Leu73, and Lys87. ATP-binding positions include 88–90, Glu98, and 122–128; these read GLR and FSFLSSS.

Belongs to the bacterial CoaD family. Homohexamer. The cofactor is Mg(2+).

The protein localises to the cytoplasm. It carries out the reaction (R)-4'-phosphopantetheine + ATP + H(+) = 3'-dephospho-CoA + diphosphate. Its pathway is cofactor biosynthesis; coenzyme A biosynthesis; CoA from (R)-pantothenate: step 4/5. Reversibly transfers an adenylyl group from ATP to 4'-phosphopantetheine, yielding dephospho-CoA (dPCoA) and pyrophosphate. The protein is Phosphopantetheine adenylyltransferase of Nocardia farcinica (strain IFM 10152).